The following is a 155-amino-acid chain: uncharacterized protein (155 aa).

5 helical membrane passes run 4 to 24 (IVGALAVFVITYALFSAAGYL), 46 to 66 (AIGIIWAILFALISLSAAIVY), 77 to 97 (FWFTLLINYVLNQAFSYFQFT), 101 to 121 (LLAASLDCLLVAITAIVLLII), and 130 to 150 (SYLLLPYFLWSAFATFLSFTI).

It belongs to the TspO/BZRP family.

The protein localises to the cell membrane. This is an uncharacterized protein from Bacillus subtilis (strain 168).